We begin with the raw amino-acid sequence, 443 residues long: Glucose-6-phosphate isomerase (443 aa).

Glutamate 285 (proton donor) is an active-site residue. Catalysis depends on residues histidine 306 and lysine 420.

The protein belongs to the GPI family.

The protein localises to the cytoplasm. The catalysed reaction is alpha-D-glucose 6-phosphate = beta-D-fructose 6-phosphate. Its pathway is carbohydrate biosynthesis; gluconeogenesis. It functions in the pathway carbohydrate degradation; glycolysis; D-glyceraldehyde 3-phosphate and glycerone phosphate from D-glucose: step 2/4. In terms of biological role, catalyzes the reversible isomerization of glucose-6-phosphate to fructose-6-phosphate. In Staphylococcus aureus (strain bovine RF122 / ET3-1), this protein is Glucose-6-phosphate isomerase.